The primary structure comprises 477 residues: Pentatricopeptide repeat-containing protein At4g14170 (477 aa).

PPR repeat units lie at residues 65 to 96 (NVVLSSKLVLAYSKLNHLFPTSLSVFWHMPYR), 97 to 131 (NIFSWNIIIGEFSRSGFASKSIDLFLRMWRESCVR), 133 to 167 (DDFTLPLILRACSASREAKSGDLIHVLCLKLGFSS), 168 to 198 (SLFVSSALVIMYVDMGKLLHARKLFDDMPVR), 199 to 233 (DSVLYTAMFGGYVQQGEAMLGLAMFREMGYSGFAL), 234 to 264 (DSVVMVSLLMACGQLGALKHGKSVHGWCIRR), 269 to 299 (GLNLGNAITDMYVKCSILDYAHTVFVNMSRR), 300 to 334 (DVISWSSLILGYGLDGDVVMSFKLFDEMLKEGIEP), 335 to 369 (NAVTFLGVLSACAHGGLVEKSWLYFRLMQEYNIVP), and 370 to 400 (ELKHYASVADCMSRAGLLEEAEKFLEDMPVK). Residues 405 to 477 (VMGAVLSGCK…ISKVPGCSSI (73 aa)) form a type E motif; degenerate region.

This sequence belongs to the PPR family. PCMP-E subfamily.

The polypeptide is Pentatricopeptide repeat-containing protein At4g14170 (PCMP-E17) (Arabidopsis thaliana (Mouse-ear cress)).